The chain runs to 577 residues: MFS-type transporter pgmG (577 aa).

Positions 1 to 32 are disordered; it reads MSETVTQTETDQRPATARSLGAEEKEAKSDEQ. The span at 21–31 shows a compositional bias: basic and acidic residues; that stretch reads GAEEKEAKSDE. Helical transmembrane passes span 45-65, 84-104, 111-131, 141-161, 174-194, 218-238, 259-279, and 292-312; these read FIVIISILSSVTLYSLDNTIV, WLSVAFLVACVATNSIWSKIY, WLYLFCVVLFEVGSAMCGAAP, ALAGLGGAGLYVGVMTLLSVN, TGLTWGVGTVLGPIVGGGFAV, PLTVPPVFFAAVAIPIYLFML, LGTILMIGACVSGVMAINFGG, and CFVVSGVLFIVFGLQQWYCIG. N-linked (GlcNAc...) asparagine glycosylation occurs at Asn317. Residues 330–350 traverse the membrane as a helical segment; it reads FIILFVQTASVATVFFVPIYF. Asn360 carries an N-linked (GlcNAc...) asparagine glycan. Helical transmembrane passes span 363–383, 395–415, 426–446, 457–477, and 532–552; these read AIDAGVRLLPLVCFIVAAMIL, MPWYLVGGCLSLVGSVLMYTI, GYMIILGVGGGMYAQASFAVA, VATGFISLAQLTGGTIALAIA, and ISQVYILPITGAAMSISLAIF.

It belongs to the major facilitator superfamily. TCR/Tet family.

Its subcellular location is the membrane. In terms of biological role, MFS-type transporter; part of the gene cluster that mediates the biosynthesis of pleosporalin A, ascomycone A, as well as a third cryptic naphthoquinone derived pigment, all responsible for the coloration of conidia. Seems not to be involved in pigment biosynthesis although its expression is regulated by the cluster-specific transcription factor pgmR. This chain is MFS-type transporter pgmG, found in Aspergillus terreus (strain NIH 2624 / FGSC A1156).